The sequence spans 150 residues: 3-hydroxyacyl-[acyl-carrier-protein] dehydratase FabZ (150 aa).

The active site involves histidine 57.

It belongs to the thioester dehydratase family. FabZ subfamily.

It localises to the cytoplasm. The catalysed reaction is a (3R)-hydroxyacyl-[ACP] = a (2E)-enoyl-[ACP] + H2O. Functionally, involved in unsaturated fatty acids biosynthesis. Catalyzes the dehydration of short chain beta-hydroxyacyl-ACPs and long chain saturated and unsaturated beta-hydroxyacyl-ACPs. This is 3-hydroxyacyl-[acyl-carrier-protein] dehydratase FabZ from Mannheimia succiniciproducens (strain KCTC 0769BP / MBEL55E).